Here is a 747-residue protein sequence, read N- to C-terminus: Anoctamin-9 (747 aa).

At Met1–Thr193 the chain is on the cytoplasmic side. The helical transmembrane segment at Tyr194–Phe214 threads the bilayer. Residues Asp215–Asn259 are Extracellular-facing. A Phosphoserine; by PKA modification is found at Ser245. Residues Glu260–Trp280 traverse the membrane as a helical segment. Over Lys281–Thr326 the chain is Cytoplasmic. Residues Ile327–Val347 traverse the membrane as a helical segment. Over Val348–Gln364 the chain is Extracellular. A helical transmembrane segment spans residues Val365–Thr385. Topologically, residues Lys386 to Lys414 are cytoplasmic. Residues Phe415–Gly435 traverse the membrane as a helical segment. Residues Arg436 to Thr543 lie on the Extracellular side of the membrane. Residues Ile544–Ile564 form a helical membrane-spanning segment. At Arg565–Thr595 the chain is on the cytoplasmic side. The helical transmembrane segment at Ile596–Pro616 threads the bilayer. Residues Arg617–Thr695 lie on the Extracellular side of the membrane. 4 N-linked (GlcNAc...) asparagine glycosylation sites follow: Asn630, Asn643, Asn665, and Asn681. A helical membrane pass occupies residues Phe696–Pro716. The Cytoplasmic segment spans residues Asp717–Val747.

It belongs to the anoctamin family. Post-translationally, phosphorylation on Ser-245 by cAMP-dependent protein kinase A (PKA)is essential for activation of its cation channel activity. Highly expressed in the olfactory epithelium, particularly in mature olfactory sensory neurons (at protein level). Expressed in the kidney (at protein level). Predominant expression seen in epithelial tissues. Highly expressed in the small intestine, colon and stomach.

It is found in the cell membrane. It localises to the endoplasmic reticulum. It catalyses the reaction a 1,2-diacyl-sn-glycero-3-phospho-L-serine(in) = a 1,2-diacyl-sn-glycero-3-phospho-L-serine(out). The catalysed reaction is a beta-D-galactosyl-(1&lt;-&gt;1')-N-acylsphing-4-enine(out) = a beta-D-galactosyl-(1&lt;-&gt;1')-N-acylsphing-4-enine(in). It carries out the reaction a 1,2-diacyl-sn-glycero-3-phosphocholine(in) = a 1,2-diacyl-sn-glycero-3-phosphocholine(out). The enzyme catalyses Ca(2+)(in) = Ca(2+)(out). It catalyses the reaction Na(+)(in) = Na(+)(out). The catalysed reaction is K(+)(in) = K(+)(out). With respect to regulation, cation channel activity is activated via phosphorylation on Ser-245 by cAMP-dependent protein kinase A (PKA). Inhibited by NaCl. Functionally, PKA-activated nonselective cation channel. Discriminates poorly among cations but is more permeable to Ca(2+) ions than to monovalent cations. Acts as a calcium-activated calcium permeable channel which may operate as a endoplasmic reticulum (ER) Ca(2+)-leak channel, reducing the loading of the ER Ca(2+) store. Regulates intracellular Ca2+ signals, ion channel activity, and cytokine release in the renal tissue. Plays an important role in olfaction, amplifying cAMP-evoked cyclic nucleotide-gated (CNG) channel currents in the olfactory sensory neurons. Has calcium-dependent phospholipid scramblase activity; scrambles phosphatidylserine, phosphatidylcholine and galactosylceramide. Does not exhibit calcium-activated chloride channel (CaCC) activity. Can inhibit the activity of ANO1. This Mus musculus (Mouse) protein is Anoctamin-9.